Reading from the N-terminus, the 151-residue chain is Small ribosomal subunit protein uS15 (151 aa).

It belongs to the universal ribosomal protein uS15 family.

This Spodoptera frugiperda (Fall armyworm) protein is Small ribosomal subunit protein uS15 (RpS13).